Here is a 349-residue protein sequence, read N- to C-terminus: Isopentenyl-diphosphate delta-isomerase (349 aa).

6–7 (RK) provides a ligand contact to substrate. FMN-binding positions include 62-64 (AMT), S93, and N122. A substrate-binding site is contributed by Q152. Position 153 (E153) interacts with Mg(2+). Residues K184, T214, 258-259 (GG), and 280-281 (AG) each bind FMN.

It belongs to the IPP isomerase type 2 family. In terms of assembly, homooctamer. Dimer of tetramers. FMN is required as a cofactor. NADPH serves as cofactor. Requires Mg(2+) as cofactor.

The protein resides in the cytoplasm. It carries out the reaction isopentenyl diphosphate = dimethylallyl diphosphate. In terms of biological role, involved in the biosynthesis of isoprenoids. Catalyzes the 1,3-allylic rearrangement of the homoallylic substrate isopentenyl (IPP) to its allylic isomer, dimethylallyl diphosphate (DMAPP). This is Isopentenyl-diphosphate delta-isomerase from Bacillus subtilis (strain 168).